A 160-amino-acid polypeptide reads, in one-letter code: S-ribosylhomocysteine lyase (160 aa).

Fe cation is bound by residues H57, H61, and C127.

This sequence belongs to the LuxS family. As to quaternary structure, homodimer. It depends on Fe cation as a cofactor.

The catalysed reaction is S-(5-deoxy-D-ribos-5-yl)-L-homocysteine = (S)-4,5-dihydroxypentane-2,3-dione + L-homocysteine. Its function is as follows. Involved in the synthesis of autoinducer 2 (AI-2) which is secreted by bacteria and is used to communicate both the cell density and the metabolic potential of the environment. The regulation of gene expression in response to changes in cell density is called quorum sensing. Catalyzes the transformation of S-ribosylhomocysteine (RHC) to homocysteine (HC) and 4,5-dihydroxy-2,3-pentadione (DPD). In Streptococcus thermophilus (strain CNRZ 1066), this protein is S-ribosylhomocysteine lyase.